We begin with the raw amino-acid sequence, 336 residues long: Myb family transcription factor PHL8 (336 aa).

The 61-residue stretch at 31 to 91 (TDAKPRLKWT…HLQKYRLGKS (61 aa)) folds into the HTH myb-type domain. The H-T-H motif DNA-binding region spans 62–87 (PKGLMKVMEIPGLTLYHLKSHLQKYR). Residues 100–134 (EVSSASENQEVESKNDSRDLRGCSVTEENSNPAKE) form a disordered region. The span at 110–120 (VESKNDSRDLR) shows a compositional bias: basic and acidic residues. A coiled-coil region spans residues 139–159 (TEALQMQMEVQKKLHEQIEVQ). The short motif at 152 to 157 (LHEQIE) is the LHEQLE element.

This sequence belongs to the MYB-CC family.

Its subcellular location is the nucleus. This chain is Myb family transcription factor PHL8, found in Arabidopsis thaliana (Mouse-ear cress).